The following is a 228-amino-acid chain: Ribosomal RNA small subunit methyltransferase G (228 aa).

S-adenosyl-L-methionine contacts are provided by residues G70, A121–E122, and R138.

Belongs to the methyltransferase superfamily. RNA methyltransferase RsmG family.

It is found in the cytoplasm. Functionally, specifically methylates the N7 position of a guanine in 16S rRNA. This Thermotoga petrophila (strain ATCC BAA-488 / DSM 13995 / JCM 10881 / RKU-1) protein is Ribosomal RNA small subunit methyltransferase G.